We begin with the raw amino-acid sequence, 234 residues long: Probable transcriptional regulatory protein TcrX (234 aa).

Residues 10-124 enclose the Response regulatory domain; it reads TVLVVDDEPV…EVVLRLRALL (115 aa). A 4-aspartylphosphate modification is found at aspartate 59. A DNA-binding region (ompR/PhoB-type) is located at residues 135-232; it reads GAQLVVGDLV…LRGAGYVLKP (98 aa).

In terms of processing, phosphorylated by TcrY.

Its subcellular location is the cytoplasm. Its function is as follows. Member of the two-component regulatory system TcrY/TcrX. This Mycobacterium tuberculosis (strain ATCC 25618 / H37Rv) protein is Probable transcriptional regulatory protein TcrX (tcrX).